The chain runs to 121 residues: Nitrogenase-stabilizing/protective protein NifW (121 aa).

Belongs to the NifW family. In terms of assembly, homotrimer; associates with NifD.

In terms of biological role, may protect the nitrogenase Fe-Mo protein from oxidative damage. The polypeptide is Nitrogenase-stabilizing/protective protein NifW (Leptothrix cholodnii (strain ATCC 51168 / LMG 8142 / SP-6) (Leptothrix discophora (strain SP-6))).